We begin with the raw amino-acid sequence, 296 residues long: MNLRDFFVITTWWGKILGAFFGYLTAGPVGALFGILVGNFFDRGLVSYYSNPHWLYHAEKQRIVQKAFFEATFSIMGHVAKSDGRVSEQEISMAKSIMNEMKLSKGQKDLAKRLFNEGKQADFNVSLALIQLQRICKDNRDLLKLFVDIQYRAAQVDGLSSQKIHALDNIFTHLGFAPLHKQYRFYEDFGSYFQQEQSKQHYHNQQEYKHTSSSQGQQGYKPQSPPNTLAHAFALLEVSPNANKQEVRRAYRRLLSRNHPDKLIAQGLPEEMIKLANDKTHQIMKAYELICETKGW.

At 1-15 (MNLRDFFVITTWWGK) the chain is on the periplasmic side. Residues 16–39 (ILGAFFGYLTAGPVGALFGILVGN) traverse the membrane as a helical segment. Residues 40–296 (FFDRGLVSYY…YELICETKGW (257 aa)) are Cytoplasmic-facing. Positions 200–225 (QHYHNQQEYKHTSSSQGQQGYKPQSP) are disordered. A compositionally biased stretch (polar residues) spans 211–221 (TSSSQGQQGYK). The J domain maps to 231-296 (HAFALLEVSP…YELICETKGW (66 aa)).

As to quaternary structure, homodimer.

The protein localises to the cell inner membrane. In terms of biological role, regulatory DnaK co-chaperone. Direct interaction between DnaK and DjlA is needed for the induction of the wcaABCDE operon, involved in the synthesis of a colanic acid polysaccharide capsule, possibly through activation of the RcsB/RcsC phosphotransfer signaling pathway. The colanic acid capsule may help the bacterium survive conditions outside the host. The protein is Co-chaperone protein DjlA of Legionella pneumophila subsp. pneumophila (strain Philadelphia 1 / ATCC 33152 / DSM 7513).